The primary structure comprises 156 residues: Small ribosomal subunit protein uS7 (156 aa).

The protein belongs to the universal ribosomal protein uS7 family. As to quaternary structure, part of the 30S ribosomal subunit. Contacts proteins S9 and S11.

Its function is as follows. One of the primary rRNA binding proteins, it binds directly to 16S rRNA where it nucleates assembly of the head domain of the 30S subunit. Is located at the subunit interface close to the decoding center, probably blocks exit of the E-site tRNA. This chain is Small ribosomal subunit protein uS7, found in Maridesulfovibrio salexigens (strain ATCC 14822 / DSM 2638 / NCIMB 8403 / VKM B-1763) (Desulfovibrio salexigens).